The sequence spans 360 residues: MKPSIVAKLEALQERHEEVQALLGEPSVIADMDRFRALSREYAQLTDITRCFQQWQQAQEDQQTAEMMLDDPEMRDMAQEELKEGKAAIEALEQELQVLLLPKDPDDERGCFLEVRAGTGGDEAAIFAGDLFRMYSRYAESRRWRVEVMSASDGEHGGYKEVIAKISGDGVYGQLKFESGGHRVQRVPATESQGRIHTSACTVAVMAAVPEAELPDINPSDLRIDTFRSSGAGGQHVNTTDSAIRITHLPTGIVVECQDERSQHKNKAKALSVLGARIRAAEIHKRQQEEASTRRNLLGSGDRSDRIRTYNFPQGRVTDHRINLTLYRLDEVMEGKLDALIQPVVQEYQADQLAALSEQE.

Position 235 is an N5-methylglutamine (Gln235). Positions 284–293 (HKRQQEEAST) are enriched in basic and acidic residues. Positions 284-305 (HKRQQEEASTRRNLLGSGDRSD) are disordered.

The protein belongs to the prokaryotic/mitochondrial release factor family. Methylated by PrmC. Methylation increases the termination efficiency of RF1.

Its subcellular location is the cytoplasm. Functionally, peptide chain release factor 1 directs the termination of translation in response to the peptide chain termination codons UAG and UAA. The sequence is that of Peptide chain release factor 1 from Pectobacterium atrosepticum (strain SCRI 1043 / ATCC BAA-672) (Erwinia carotovora subsp. atroseptica).